Reading from the N-terminus, the 130-residue chain is DNA-directed RNA polymerase subunit omega (130 aa).

2 disordered regions span residues E79–D98 and T108–E130.

This sequence belongs to the RNA polymerase subunit omega family. In terms of assembly, the RNAP catalytic core consists of 2 alpha, 1 beta, 1 beta' and 1 omega subunit. When a sigma factor is associated with the core the holoenzyme is formed, which can initiate transcription.

The catalysed reaction is RNA(n) + a ribonucleoside 5'-triphosphate = RNA(n+1) + diphosphate. Functionally, promotes RNA polymerase assembly. Latches the N- and C-terminal regions of the beta' subunit thereby facilitating its interaction with the beta and alpha subunits. The protein is DNA-directed RNA polymerase subunit omega of Nitrobacter winogradskyi (strain ATCC 25391 / DSM 10237 / CIP 104748 / NCIMB 11846 / Nb-255).